A 122-amino-acid polypeptide reads, in one-letter code: MIQMQSQLNVADNSGAKRVQCIKVLGGSHRRYARIGDIIKVAVKEASPRGKVKKGDVHTAVVVRTKKGVRRTDGSAIRFDENAAVMLNANLQPIGTRIFGPVTRELRNEKFMKIVSLAPEVL.

It belongs to the universal ribosomal protein uL14 family. As to quaternary structure, part of the 50S ribosomal subunit. Forms a cluster with proteins L3 and L19. In the 70S ribosome, L14 and L19 interact and together make contacts with the 16S rRNA in bridges B5 and B8.

Functionally, binds to 23S rRNA. Forms part of two intersubunit bridges in the 70S ribosome. The sequence is that of Large ribosomal subunit protein uL14 from Colwellia psychrerythraea (strain 34H / ATCC BAA-681) (Vibrio psychroerythus).